We begin with the raw amino-acid sequence, 639 residues long: ATP-dependent zinc metalloprotease FtsH (639 aa).

The Cytoplasmic segment spans residues methionine 1–lysine 20. A helical membrane pass occupies residues asparagine 21–isoleucine 41. Residues arginine 42–leucine 120 lie on the Periplasmic side of the membrane. The chain crosses the membrane as a helical span at residues isoleucine 121–phenylalanine 141. At arginine 142–glycine 639 the chain is on the cytoplasmic side. Glycine 212 to threonine 219 is an ATP binding site. Residue histidine 434 coordinates Zn(2+). Glutamate 435 is an active-site residue. Residues histidine 438 and aspartate 510 each coordinate Zn(2+).

It in the central section; belongs to the AAA ATPase family. In the C-terminal section; belongs to the peptidase M41 family. Homohexamer. Zn(2+) serves as cofactor.

Its subcellular location is the cell inner membrane. In terms of biological role, acts as a processive, ATP-dependent zinc metallopeptidase for both cytoplasmic and membrane proteins. Plays a role in the quality control of integral membrane proteins. This chain is ATP-dependent zinc metalloprotease FtsH, found in Borreliella burgdorferi (strain ZS7) (Borrelia burgdorferi).